Here is a 408-residue protein sequence, read N- to C-terminus: MAKTRPKVLSIVLAGGEGKRLMPLTMDRAKPAVPFGGTYRLIDFVLSNLANSGLTQIAVLTQYKSHSLDRHISITWRMSTMLGSYVTPVPAQQRLGPRWYQGSADAIYQSLNLINDQSPDYVVVFGADNIYRMDVDAMLQYHIDSGLGCTVAGIRVPRKDASAFGIIDADQNHKITEFLEKPADPPGLPDASDESFASMGNYIFSREALVQALHDDAHSADSRHDMGGDVIPRFVNAADAQVYDFRDNEVPGNTEKDADYWRDVGTIDAYHDAHMDLVSVEPEFNLYNPDWPIWTMQEQAPGAKFVMRGSCDDTLVSAGCIISGTDIYRTVLGPRARIERWARVDESIVMNNVAIGSNATVHRAILDKNVIVPDGAQVGVDHDHDRARGFTVSPGGVTVVGKGITVPY.

Alpha-D-glucose 1-phosphate contacts are provided by residues Y100, G165, 180–181 (EK), and S198.

The protein belongs to the bacterial/plant glucose-1-phosphate adenylyltransferase family. As to quaternary structure, homotetramer.

It carries out the reaction alpha-D-glucose 1-phosphate + ATP + H(+) = ADP-alpha-D-glucose + diphosphate. The protein operates within glycan biosynthesis; glycogen biosynthesis. In terms of biological role, involved in the biosynthesis of ADP-glucose, a building block required for the elongation reactions to produce glycogen. Catalyzes the reaction between ATP and alpha-D-glucose 1-phosphate (G1P) to produce pyrophosphate and ADP-Glc. This Cutibacterium acnes (strain DSM 16379 / KPA171202) (Propionibacterium acnes) protein is Glucose-1-phosphate adenylyltransferase.